Consider the following 611-residue polypeptide: Growth hormone receptor (611 aa).

Positions 1-20 are cleaved as a signal peptide; the sequence is MDLRHLLLTLVLVCANDSLS. Asn16 carries an N-linked (GlcNAc...) asparagine glycan. Residues 21–240 lie on the Extracellular side of the membrane; that stretch reads ASDDVLRLPQ…EFVHCAEEIE (220 aa). A disulfide bridge connects residues Cys34 and Cys44. N-linked (GlcNAc...) asparagine glycosylation is present at Asn53. A disulfide bridge connects residues Cys75 and Cys86. A glycan (N-linked (GlcNAc...) asparagine) is linked at Asn89. Cysteines 100 and 114 form a disulfide. The 104-residue stretch at 125–228 folds into the Fibronectin type-III domain; the sequence is PPVHLNWTLL…EILYVSFSQA (104 aa). 3 N-linked (GlcNAc...) asparagine glycosylation sites follow: Asn130, Asn135, and Asn174. Positions 214–218 match the WSXWS motif motif; sequence FGEFS. A helical membrane pass occupies residues 241–264; it reads FPWFLVVIFGACGLAVTVILILLS. Over 265 to 611 the chain is Cytoplasmic; it reads KQSRLKMLIF…STDQLNKIMP (347 aa). A required for JAK2 binding region spans residues 270–355; that stretch reads KMLIFPPVPV…HLKSHSCLGA (86 aa). A Box 1 motif motif is present at residues 273–281; it reads IFPPVPVPK. The short motif at 316 to 325 is the UbE motif element; that stretch reads DLWVEFIELD. The segment at 411–455 is disordered; sequence SLPSLANTDTQQPRMSTRPENSQPWPPFADSIDAASPSAHNQLSN. The segment covering 414-433 has biased composition (polar residues); the sequence is SLANTDTQQPRMSTRPENSQ.

It belongs to the type I cytokine receptor family. Type 1 subfamily. The soluble form (GHBP) is produced by phorbol ester-promoted proteolytic cleavage at the cell surface (shedding) by ADAM17/TACE.

It localises to the cell membrane. It is found in the secreted. Functionally, receptor for pituitary gland growth hormone (GH1) involved in regulating postnatal body growth. On ligand binding, couples to the JAK2/STAT5 pathway. The soluble form (GHBP) acts as a reservoir of growth hormone in plasma and may be a modulator/inhibitor of GH signaling. This is Growth hormone receptor (GHR) from Columba livia (Rock dove).